A 149-amino-acid chain; its full sequence is 3-dehydroquinate dehydratase (149 aa).

Y22 serves as the catalytic Proton acceptor. Substrate-binding residues include N73, H79, and D86. The active-site Proton donor is the H99. Substrate-binding positions include 100–101 and R110; that span reads LS.

The protein belongs to the type-II 3-dehydroquinase family. As to quaternary structure, homododecamer.

The catalysed reaction is 3-dehydroquinate = 3-dehydroshikimate + H2O. It functions in the pathway metabolic intermediate biosynthesis; chorismate biosynthesis; chorismate from D-erythrose 4-phosphate and phosphoenolpyruvate: step 3/7. Catalyzes a trans-dehydration via an enolate intermediate. The sequence is that of 3-dehydroquinate dehydratase from Prochlorococcus marinus (strain SARG / CCMP1375 / SS120).